A 278-amino-acid polypeptide reads, in one-letter code: NAD kinase (278 aa).

The Proton acceptor role is filled by Asp56. Residues 56–57 (DG), 132–133 (NE), Arg158, Asp160, and 171–176 (TAYNKS) each bind NAD(+).

It belongs to the NAD kinase family. The cofactor is a divalent metal cation.

Its subcellular location is the cytoplasm. The enzyme catalyses NAD(+) + ATP = ADP + NADP(+) + H(+). Its function is as follows. Involved in the regulation of the intracellular balance of NAD and NADP, and is a key enzyme in the biosynthesis of NADP. Catalyzes specifically the phosphorylation on 2'-hydroxyl of the adenosine moiety of NAD to yield NADP. This is NAD kinase from Streptococcus pyogenes serotype M1.